The chain runs to 184 residues: NADH-quinone oxidoreductase subunit B 2 (184 aa).

The [4Fe-4S] cluster site is built by Cys59, Cys60, Cys125, and Cys153.

Belongs to the complex I 20 kDa subunit family. As to quaternary structure, NDH-1 is composed of 14 different subunits. Subunits NuoB, C, D, E, F, and G constitute the peripheral sector of the complex. The cofactor is [4Fe-4S] cluster.

It is found in the cell inner membrane. It carries out the reaction a quinone + NADH + 5 H(+)(in) = a quinol + NAD(+) + 4 H(+)(out). NDH-1 shuttles electrons from NADH, via FMN and iron-sulfur (Fe-S) centers, to quinones in the respiratory chain. Couples the redox reaction to proton translocation (for every two electrons transferred, four hydrogen ions are translocated across the cytoplasmic membrane), and thus conserves the redox energy in a proton gradient. The polypeptide is NADH-quinone oxidoreductase subunit B 2 (Solibacter usitatus (strain Ellin6076)).